Reading from the N-terminus, the 112-residue chain is UPF0342 protein STER_0693 (112 aa).

It belongs to the UPF0342 family.

This is UPF0342 protein STER_0693 from Streptococcus thermophilus (strain ATCC BAA-491 / LMD-9).